A 329-amino-acid chain; its full sequence is DNA-directed RNA polymerase subunit alpha (329 aa).

The tract at residues 1 to 235 (MQGSVTEFLK…EQLEAFVDLR (235 aa)) is alpha N-terminal domain (alpha-NTD). Residues 249 to 329 (FDPILLRPVD…NWPPASIADE (81 aa)) form an alpha C-terminal domain (alpha-CTD) region.

This sequence belongs to the RNA polymerase alpha chain family. As to quaternary structure, homodimer. The RNAP catalytic core consists of 2 alpha, 1 beta, 1 beta' and 1 omega subunit. When a sigma factor is associated with the core the holoenzyme is formed, which can initiate transcription.

It carries out the reaction RNA(n) + a ribonucleoside 5'-triphosphate = RNA(n+1) + diphosphate. Its function is as follows. DNA-dependent RNA polymerase catalyzes the transcription of DNA into RNA using the four ribonucleoside triphosphates as substrates. This is DNA-directed RNA polymerase subunit alpha from Shigella dysenteriae serotype 1 (strain Sd197).